Consider the following 548-residue polypeptide: ADP,ATP carrier protein 1 (548 aa).

The next 2 helical transmembrane spans lie at 39 to 59 (RPVF…YSVS) and 75 to 95 (SIPY…VFSI). N101 is a glycosylation site (N-linked (GlcNAc...) asparagine). 8 consecutive transmembrane segments (helical) span residues 107–127 (VFSI…TVLM), 149–169 (MVFM…SWTS), 171–191 (LMYL…FFAL), 204–224 (FIPL…FSMK), 239–259 (LFFR…IYLI), 302–322 (LVLA…MVEA), 350–370 (IQLA…PALI), and 374–394 (GFLY…ASVF). N-linked (GlcNAc...) asparagine glycans are attached at residues N400 and N406. The chain crosses the membrane as a helical span at residues 410–430 (LGFVSIGENLWLEQLLGAIIV). N488 carries an N-linked (GlcNAc...) asparagine glycan. Residues 494–514 (KAAISSLTIVTVITACWGFAV) traverse the membrane as a helical segment.

Belongs to the ADP/ATP translocase tlc family.

The protein localises to the cell membrane. Functionally, ATP transporter involved in the uptake of ATP from the host cell cytoplasm. Provides the microsporidian cell with host ATP in exchange for ADP. This is an obligate exchange system. This energy acquiring activity is an important component of microsporidian parasitism. The protein is ADP,ATP carrier protein 1 (ANC1) of Paranosema grylli (Microsporidian parasite).